Reading from the N-terminus, the 372-residue chain is DNA/RNA-binding protein ALBA4 (372 aa).

Belongs to the histone-like Alba family. As to quaternary structure, identified in a TARE6-associated complex consisting of over 30 proteins and including ALBA1, ALBA2 and ALBA4; the complex binds to the non-coding subtelomeric repeat region TARE6.

The protein resides in the nucleus. It localises to the chromosome. It is found in the telomere. The protein localises to the cytoplasm. Possesses DNA- and RNA-binding activities. Binds to DNA fragments longer than 14 base pairs with relaxed sequence specificity. Associates with the subtelomeric TARE6 repeats. Regulates the abundance of transcript sub-populations in a stage-specific manner. Regulates activation of male gametocytes. Participates in the coordination of sporozoite development in the oocyst. The protein is DNA/RNA-binding protein ALBA4 of Plasmodium falciparum (isolate 3D7).